The following is a 155-amino-acid chain: Small ribosomal subunit protein uS7 (155 aa).

Belongs to the universal ribosomal protein uS7 family. Part of the 30S ribosomal subunit. Contacts proteins S9 and S11.

One of the primary rRNA binding proteins, it binds directly to 16S rRNA where it nucleates assembly of the head domain of the 30S subunit. Is located at the subunit interface close to the decoding center, probably blocks exit of the E-site tRNA. This is Small ribosomal subunit protein uS7 from Chlorobium chlorochromatii (strain CaD3).